Here is a 64-residue protein sequence, read N- to C-terminus: Large ribosomal subunit protein eL37 (64 aa).

4 residues coordinate Zn(2+): Cys20, Cys23, Cys35, and Cys38. The C4-type zinc-finger motif lies at 20–38 (CRRCGRRAFHVRKKVCAAC).

Belongs to the eukaryotic ribosomal protein eL37 family. Zn(2+) is required as a cofactor.

In terms of biological role, binds to the 23S rRNA. This Methanococcus maripaludis (strain C6 / ATCC BAA-1332) protein is Large ribosomal subunit protein eL37.